A 261-amino-acid chain; its full sequence is Carnitinyl-CoA dehydratase (261 aa).

E111 (nucleophile) is an active-site residue. Residue E131 is the Proton acceptor of the active site.

This sequence belongs to the enoyl-CoA hydratase/isomerase family.

The catalysed reaction is (R)-carnitinyl-CoA = crotonobetainyl-CoA + H2O. It participates in amine and polyamine metabolism; carnitine metabolism. Functionally, catalyzes the reversible dehydration of L-carnitinyl-CoA to crotonobetainyl-CoA. This is Carnitinyl-CoA dehydratase from Escherichia coli O6:K15:H31 (strain 536 / UPEC).